The chain runs to 750 residues: Photosystem I P700 chlorophyll a apoprotein A1 (750 aa).

8 consecutive transmembrane segments (helical) span residues 70–93, 156–179, 195–219, 291–309, 346–369, 385–411, 433–455, and 531–549; these read VFSAHFGQLSIIFLWLSGMYFHGA, LYCTAIGALVFAALMLFAGWFHYH, LNHHLTGLLGLGSLSWAGHQIHVSL, IIHHHLAIAILFLIAGHMY, WHAQLSINLAMLGSLTIVVAHHMY, LSLFTHHMWIGGFLIVGAAAHAAIFMV, AIISHLNWVCIFLGFHSFGLYIH, and FLVHHIHAFTIHVTVLILL. Residues cysteine 573 and cysteine 582 each coordinate [4Fe-4S] cluster. A run of 2 helical transmembrane segments spans residues 589 to 610 and 664 to 686; these read HVFLGLFWMYNSISVVIFHFSW and LSAYGLFFLGAHFVWAFSLMFLF. Histidine 675 is a binding site for chlorophyll a'. Residues methionine 683 and tyrosine 691 each contribute to the chlorophyll a site. Tryptophan 692 serves as a coordination point for phylloquinone. A helical membrane pass occupies residues 724-744; it reads AVGVTHYLLGGIATTWAFFLA.

This sequence belongs to the PsaA/PsaB family. The PsaA/B heterodimer binds the P700 chlorophyll special pair and subsequent electron acceptors. PSI consists of a core antenna complex that captures photons, and an electron transfer chain that converts photonic excitation into a charge separation. The eukaryotic PSI reaction center is composed of at least 11 subunits. P700 is a chlorophyll a/chlorophyll a' dimer, A0 is one or more chlorophyll a, A1 is one or both phylloquinones and FX is a shared 4Fe-4S iron-sulfur center. is required as a cofactor.

The protein resides in the plastid. It localises to the chloroplast thylakoid membrane. It carries out the reaction reduced [plastocyanin] + hnu + oxidized [2Fe-2S]-[ferredoxin] = oxidized [plastocyanin] + reduced [2Fe-2S]-[ferredoxin]. Functionally, psaA and PsaB bind P700, the primary electron donor of photosystem I (PSI), as well as the electron acceptors A0, A1 and FX. PSI is a plastocyanin-ferredoxin oxidoreductase, converting photonic excitation into a charge separation, which transfers an electron from the donor P700 chlorophyll pair to the spectroscopically characterized acceptors A0, A1, FX, FA and FB in turn. Oxidized P700 is reduced on the lumenal side of the thylakoid membrane by plastocyanin. This chain is Photosystem I P700 chlorophyll a apoprotein A1, found in Glycine max (Soybean).